A 344-amino-acid polypeptide reads, in one-letter code: L-threonine 3-dehydrogenase (344 aa).

Cysteine 42 is a Zn(2+) binding site. Active-site charge relay system residues include threonine 44 and histidine 47. Positions 67, 68, 97, 100, 103, and 111 each coordinate Zn(2+). NAD(+) is bound by residues isoleucine 179, aspartate 199, arginine 204, 266 to 268, and 290 to 291; these read LGI and IY.

It belongs to the zinc-containing alcohol dehydrogenase family. As to quaternary structure, homotetramer. The cofactor is Zn(2+).

The protein resides in the cytoplasm. It carries out the reaction L-threonine + NAD(+) = (2S)-2-amino-3-oxobutanoate + NADH + H(+). The protein operates within amino-acid degradation; L-threonine degradation via oxydo-reductase pathway; glycine from L-threonine: step 1/2. Catalyzes the NAD(+)-dependent oxidation of L-threonine to 2-amino-3-ketobutyrate. This chain is L-threonine 3-dehydrogenase, found in Chelativorans sp. (strain BNC1).